A 172-amino-acid chain; its full sequence is Peptidyl-tRNA hydrolase (172 aa).

Residue Tyr-10 coordinates tRNA. Residue His-15 is the Proton acceptor of the active site. Residues Phe-59, Asn-61, and Asn-101 each contribute to the tRNA site.

This sequence belongs to the PTH family. As to quaternary structure, monomer.

The protein localises to the cytoplasm. It carries out the reaction an N-acyl-L-alpha-aminoacyl-tRNA + H2O = an N-acyl-L-amino acid + a tRNA + H(+). Hydrolyzes ribosome-free peptidyl-tRNAs (with 1 or more amino acids incorporated), which drop off the ribosome during protein synthesis, or as a result of ribosome stalling. In terms of biological role, catalyzes the release of premature peptidyl moieties from peptidyl-tRNA molecules trapped in stalled 50S ribosomal subunits, and thus maintains levels of free tRNAs and 50S ribosomes. This is Peptidyl-tRNA hydrolase from Rubrobacter xylanophilus (strain DSM 9941 / JCM 11954 / NBRC 16129 / PRD-1).